Here is a 682-residue protein sequence, read N- to C-terminus: Potassium-transporting ATPase ATP-binding subunit (682 aa).

5 consecutive transmembrane segments (helical) span residues 15-35, 42-62, 66-86, 233-253, and 257-277; these read AALF…AKLA, SPVM…TASG, AGFG…GNFA, LTFL…GVTL, and LLIA…LPAI. D310 (4-aspartylphosphate intermediate) is an active-site residue. Residues D347, E351, 377–384, and K395 each bind ATP; that span reads FTAQTRMS. Residues D518 and D522 each coordinate Mg(2+). Transmembrane regions (helical) follow at residues 588–608, 616–636, and 662–682; these read FAIL…LNVM, AVLA…PLAL, and VLLP…VLGA.

This sequence belongs to the cation transport ATPase (P-type) (TC 3.A.3) family. Type IA subfamily. As to quaternary structure, the system is composed of three essential subunits: KdpA, KdpB and KdpC.

The protein localises to the cell inner membrane. It catalyses the reaction K(+)(out) + ATP + H2O = K(+)(in) + ADP + phosphate + H(+). Part of the high-affinity ATP-driven potassium transport (or Kdp) system, which catalyzes the hydrolysis of ATP coupled with the electrogenic transport of potassium into the cytoplasm. This subunit is responsible for energy coupling to the transport system and for the release of the potassium ions to the cytoplasm. The sequence is that of Potassium-transporting ATPase ATP-binding subunit from Xanthomonas axonopodis pv. citri (strain 306).